Reading from the N-terminus, the 583-residue chain is DNA ligase (583 aa).

Glu-249 is an ATP binding site. Lys-251 acts as the N6-AMP-lysine intermediate in catalysis. Arg-256, Arg-271, Glu-301, Phe-341, Arg-416, and Lys-422 together coordinate ATP.

The protein belongs to the ATP-dependent DNA ligase family. The cofactor is Mg(2+).

It catalyses the reaction ATP + (deoxyribonucleotide)n-3'-hydroxyl + 5'-phospho-(deoxyribonucleotide)m = (deoxyribonucleotide)n+m + AMP + diphosphate.. Functionally, DNA ligase that seals nicks in double-stranded DNA during DNA replication, DNA recombination and DNA repair. This chain is DNA ligase, found in Pyrobaculum calidifontis (strain DSM 21063 / JCM 11548 / VA1).